The chain runs to 29 residues: uncharacterized protein (29 aa).

Residues Phe-7 to Ala-27 form a helical membrane-spanning segment.

It is found in the cell inner membrane. This is an uncharacterized protein from Escherichia coli O6:K15:H31 (strain 536 / UPEC).